Reading from the N-terminus, the 157-residue chain is Endoribonuclease YbeY (157 aa).

Zn(2+) is bound by residues H114, H118, and H124.

This sequence belongs to the endoribonuclease YbeY family. Zn(2+) serves as cofactor.

It localises to the cytoplasm. Single strand-specific metallo-endoribonuclease involved in late-stage 70S ribosome quality control and in maturation of the 3' terminus of the 16S rRNA. The chain is Endoribonuclease YbeY from Salmonella paratyphi A (strain AKU_12601).